A 573-amino-acid polypeptide reads, in one-letter code: Sulfite reductase [NADPH] hemoprotein beta-component (573 aa).

The segment at 1–20 (MAKVELKAPDGPPSDVERIK) is disordered. Cys-438, Cys-444, Cys-483, and Cys-487 together coordinate [4Fe-4S] cluster. Cys-487 is a siroheme binding site.

The protein belongs to the nitrite and sulfite reductase 4Fe-4S domain family. In terms of assembly, alpha(8)-beta(8). The alpha component is a flavoprotein, the beta component is a hemoprotein. Siroheme is required as a cofactor. The cofactor is [4Fe-4S] cluster.

It catalyses the reaction hydrogen sulfide + 3 NADP(+) + 3 H2O = sulfite + 3 NADPH + 4 H(+). It functions in the pathway sulfur metabolism; hydrogen sulfide biosynthesis; hydrogen sulfide from sulfite (NADPH route): step 1/1. Component of the sulfite reductase complex that catalyzes the 6-electron reduction of sulfite to sulfide. This is one of several activities required for the biosynthesis of L-cysteine from sulfate. The chain is Sulfite reductase [NADPH] hemoprotein beta-component from Geobacillus kaustophilus (strain HTA426).